A 238-amino-acid chain; its full sequence is Immunoglobulin superfamily member 6 (238 aa).

The first 27 residues, methionine 1 to alanine 27, serve as a signal peptide directing secretion. Residues cysteine 28–leucine 153 lie on the Extracellular side of the membrane. An Ig-like C2-type domain is found at valine 30 to glycine 134. Cysteine 51 and cysteine 118 are disulfide-bonded. The chain crosses the membrane as a helical span at residues leucine 154 to valine 174. The Cytoplasmic portion of the chain corresponds to leucine 175–proline 238. Residues glutamate 215–lysine 230 are compositionally biased toward basic and acidic residues. Positions glutamate 215–proline 238 are disordered.

The protein localises to the membrane. The protein is Immunoglobulin superfamily member 6 (Igsf6) of Rattus norvegicus (Rat).